Reading from the N-terminus, the 254-residue chain is Nickel import ATP-binding protein NikD (254 aa).

One can recognise an ABC transporter domain in the interval 2-241 (PQQIELRNIA…PKHTVTRSLV (240 aa)). 36–43 (GGSGSGKS) is an ATP binding site.

The protein belongs to the ABC transporter superfamily. Nickel importer (TC 3.A.1.5.3) family. In terms of assembly, the complex is composed of two ATP-binding proteins (NikD and NikE), two transmembrane proteins (NikB and NikC) and a solute-binding protein (NikA).

It localises to the cell inner membrane. The enzyme catalyses Ni(2+)(out) + ATP + H2O = Ni(2+)(in) + ADP + phosphate + H(+). Functionally, part of the ABC transporter complex NikABCDE involved in nickel import. Responsible for energy coupling to the transport system. The polypeptide is Nickel import ATP-binding protein NikD (Shigella boydii serotype 4 (strain Sb227)).